Reading from the N-terminus, the 358-residue chain is Prostaglandin E2 receptor EP2 subtype (358 aa).

The Extracellular portion of the chain corresponds to 1–23 (MGNASNDSQSEDCETRQWLPPGE). N-linked (GlcNAc...) asparagine glycans are attached at residues Asn-3 and Asn-6. The helical transmembrane segment at 24–47 (SPAISSVMFSAGVLGNLIALALLA) threads the bilayer. At 48–65 (RRWRGDVGCSAGRRSSLS) the chain is on the cytoplasmic side. The chain crosses the membrane as a helical span at residues 66–91 (LFHVLVTELVFTDLLGTCLISPVVLA). Residues 92–111 (SYARNQTLVALAPESRACTY) are Extracellular-facing. Asn-96 carries an N-linked (GlcNAc...) asparagine glycan. Cys-109 and Cys-187 are disulfide-bonded. A helical membrane pass occupies residues 112-132 (FAFAMTFFSLATMLMLFAMAL). At 133 to 151 (ERYLSIGHPYFYQRRVSRS) the chain is on the cytoplasmic side. A helical transmembrane segment spans residues 152–176 (GGLAVLPVIYAVSLLFCSLPLLDYG). Residues 177-198 (QYVQYCPGTWCFIRHGRTAYLQ) lie on the Extracellular side of the membrane. The helical transmembrane segment at 199 to 223 (LYATLLLLLIVSVLACNFSVILNLI) threads the bilayer. Residues 224 to 262 (RMHRRSRRSRCGPSLGSGRGGPGARRRGERVSMAEETDH) are Cytoplasmic-facing. Residues 231–253 (RSRCGPSLGSGRGGPGARRRGER) form a disordered region. Residues 263–286 (LILLAIMTITFAVCSLPFTIFAYM) form a helical membrane-spanning segment. N-linked (GlcNAc...) asparagine glycosylation occurs at Asn-287. Residues 287–299 (NETSSRKEKWDLQ) are Extracellular-facing. A helical transmembrane segment spans residues 300–323 (ALRFLSINSIIDPWVFAILRPPVL). The Cytoplasmic portion of the chain corresponds to 324–358 (RLMRSVLCCRISLRTQDATQTSCSTQSDASKQADL).

This sequence belongs to the G-protein coupled receptor 1 family. Placenta and lung.

It localises to the cell membrane. In terms of biological role, receptor for prostaglandin E2 (PGE2). The activity of this receptor is mediated by G(s) proteins that stimulate adenylate cyclase. The subsequent raise in intracellular cAMP is responsible for the relaxing effect of this receptor on smooth muscle. The polypeptide is Prostaglandin E2 receptor EP2 subtype (PTGER2) (Homo sapiens (Human)).